The chain runs to 355 residues: Olfactory receptor 1I1 (355 aa).

At 1–25 (MEPEKQTEISEFFLQGLSEKPEHQT) the chain is on the extracellular side. Residues 26–49 (LLFTMFLSTYLVTIIGNALIILAI) traverse the membrane as a helical segment. Residues 50–57 (ITDSHLHT) lie on the Cytoplasmic side of the membrane. Residues 58–79 (PMYFFLFNLSLVDTLLSSTTVP) traverse the membrane as a helical segment. The Extracellular segment spans residues 80-100 (KMLANIQAQSRAIPFVGCLTQ). The chain crosses the membrane as a helical span at residues 101-120 (MYAFHLFGTMDSFLLAVMAI). Residues 121–139 (DRFVAIVHPQRYLVLMCSP) are Cytoplasmic-facing. Residues 140 to 158 (VCGLLLGASWMITNLQSLI) form a helical membrane-spanning segment. Over 159 to 195 (HTCLMAQLTFCAGSEISHFFCDLMPLLKLSGSDTHTN) the chain is Extracellular. Residues 196-219 (ELVIFAFGIVVGTSPFSCILLSYI) form a helical membrane-spanning segment. Residues 220 to 236 (RIFWTVFKIPSTRGKWK) lie on the Cytoplasmic side of the membrane. A helical membrane pass occupies residues 237–259 (AFSTCGLHLTVVSLSYGTIFAVY). Residues 260 to 272 (LQPTSPSSSQKDK) lie on the Extracellular side of the membrane. Residues 273 to 292 (AAALMCGVFIPMLNPFIYSI) traverse the membrane as a helical segment. At 293 to 355 (RNKDMKAALG…QSLAGNRDME (63 aa)) the chain is on the cytoplasmic side.

It belongs to the G-protein coupled receptor 1 family.

It localises to the cell membrane. Its function is as follows. Odorant receptor. This chain is Olfactory receptor 1I1 (OR1I1), found in Homo sapiens (Human).